Reading from the N-terminus, the 198-residue chain is Sporulation cortex protein CoxA (198 aa).

The first 21 residues, 1–21, serve as a signal peptide directing secretion; that stretch reads MGKKMTIASLILMTAGLTACG. Residues 91–115 form a disordered region; the sequence is PLATDGTYNNTNNRNMNRNAANNGY. A compositionally biased stretch (low complexity) spans 95-115; the sequence is DGTYNNTNNRNMNRNAANNGY.

The protein localises to the spore cortex. In Bacillus subtilis (strain 168), this protein is Sporulation cortex protein CoxA (coxA).